Reading from the N-terminus, the 422-residue chain is Enolase (422 aa).

Position 162 (Gln-162) interacts with (2R)-2-phosphoglycerate. Glu-204 (proton donor) is an active-site residue. 3 residues coordinate Mg(2+): Asp-241, Glu-284, and Asp-311. Residues Lys-336, Arg-365, Ser-366, and Lys-387 each coordinate (2R)-2-phosphoglycerate. The active-site Proton acceptor is Lys-336.

The protein belongs to the enolase family. It depends on Mg(2+) as a cofactor.

It is found in the cytoplasm. The protein localises to the secreted. Its subcellular location is the cell surface. It carries out the reaction (2R)-2-phosphoglycerate = phosphoenolpyruvate + H2O. The protein operates within carbohydrate degradation; glycolysis; pyruvate from D-glyceraldehyde 3-phosphate: step 4/5. In terms of biological role, catalyzes the reversible conversion of 2-phosphoglycerate (2-PG) into phosphoenolpyruvate (PEP). It is essential for the degradation of carbohydrates via glycolysis. The sequence is that of Enolase from Bartonella quintana (strain Toulouse) (Rochalimaea quintana).